The primary structure comprises 236 residues: Histone H1 (236 aa).

Residues 1–10 (MPPKKTETKA) are compositionally biased toward basic and acidic residues. Disordered regions lie at residues 1–36 (MPPKKTETKAADASAAAAPAPAAAPTSAPKTKSPST) and 94–236 (KGVF…AEKA). Residues 11-36 (ADASAAAAPAPAAAPTSAPKTKSPST) are compositionally biased toward low complexity. The H15 domain occupies 36–111 (THASYLDMIT…GPSGGTKLAK (76 aa)). A compositionally biased stretch (basic residues) spans 109–122 (LAKKVAKPAPKKAA). Residues 123–150 (PKKETKEKKPAAAKKEGAAKKETKEKKA) show a composition bias toward basic and acidic residues. Low complexity predominate over residues 153-162 (AKKAAAPKKA). Positions 165 to 174 (PKKEVKEKKA) are enriched in basic and acidic residues. Low complexity predominate over residues 202 to 220 (AKSTAKPAAAKKAAAPKKA). Positions 224–236 (KKAEKAEPAAEKA) are enriched in basic and acidic residues.

This sequence belongs to the histone H1/H5 family.

It localises to the nucleus. The protein resides in the chromosome. In terms of biological role, could act as an H1-type linker histone. In Neurospora crassa (strain ATCC 24698 / 74-OR23-1A / CBS 708.71 / DSM 1257 / FGSC 987), this protein is Histone H1 (hH1).